The following is a 101-amino-acid chain: RNA-binding protein Hfq (101 aa).

The region spanning 9-68 (DPYLNALRRERIPVSIYLVNGIKLQGQIESFDQFIILLKNTVSQMVYKHAISTVVPARSI) is the Sm domain. Positions 68-91 (ISHNNNGSSQAQAPQQAVQTTQPV) are disordered. Residues 77 to 91 (QAQAPQQAVQTTQPV) show a composition bias toward low complexity.

The protein belongs to the Hfq family. Homohexamer.

Functionally, RNA chaperone that binds small regulatory RNA (sRNAs) and mRNAs to facilitate mRNA translational regulation in response to envelope stress, environmental stress and changes in metabolite concentrations. Also binds with high specificity to tRNAs. This is RNA-binding protein Hfq from Haemophilus ducreyi (strain 35000HP / ATCC 700724).